Reading from the N-terminus, the 2725-residue chain is Teneurin-1 (2725 aa).

The segment at 1–48 (MEQTDCKPYQPLPKVKHEMDLAYTSSSDESEDGRKPRQSYNSRETLHE) is disordered. The Teneurin N-terminal domain maps to 1-318 (MEQTDCKPYQ…KPYRCCNWKC (318 aa)). The Cytoplasmic segment spans residues 1–324 (MEQTDCKPYQ…NWKCTALSAT (324 aa)). The Nuclear localization signal (NLS) motif lies at 62-65 (RKRK). The residue at position 105 (S105) is a Phosphoserine. T109 carries the post-translational modification Phosphothreonine. A Phosphoserine modification is found at S116. Residues 174–189 (AGSTQDVQSSPHNQFT) are compositionally biased toward polar residues. A disordered region spans residues 174-241 (AGSTQDVQSS…PAPPTSTQDS (68 aa)). The span at 192–201 (PLPPPPPPPH) shows a compositional bias: pro residues. The Required for interaction with SORBS1 (Ten-1 ICD form) motif lies at 290–297 (PPPRPLPR). Residues 325-345 (AITVTLALLLAYVIAVHLFGL) form a helical membrane-spanning segment. The Extracellular segment spans residues 346–2725 (TWQLQPVEGE…FMRQSEIGRR (2380 aa)). Residue N433 is glycosylated (N-linked (GlcNAc...) asparagine). EGF-like domains lie at 528–559 (IMDD…PDCA), 560–591 (RDSC…ECDV), 592–624 (PEEQ…EICE), 625–657 (EEDC…NCET), 658–691 (PLPV…SDCS), 692–721 (TELC…GPTC), 722–753 (EERS…DHCT), and 761–796 (VRDG…TGCN). Intrachain disulfides connect C532–C542, C536–C547, C549–C558, C567–C578, C580–C589, C596–C607, C601–C612, C614–C623, C628–C639, C633–C644, C646–C655, C666–C679, C681–C690, C695–C705, C699–C710, C712–C721, C726–C736, C730–C741, C743–C752, C765–C775, C769–C784, and C786–C795. N905 and N1084 each carry an N-linked (GlcNAc...) asparagine glycan. 5 NHL repeats span residues 1194 to 1219 (LFAP…VRRI), 1292 to 1336 (SHCG…NAVI), 1351 to 1402 (LSCD…IAGR), 1414 to 1458 (FLVS…VTTN), and 1481 to 1524 (CFSG…ISRN). The stretch at 1534–1553 (YEIASPADQELYQFTVNGTH) is one YD 1 repeat. N-linked (GlcNAc...) asparagine glycosylation is found at N1550 and N1567. YD repeat units follow at residues 1570–1590 (YNSE…VHIR), 1608–1632 (YWLT…ALMT), 1633–1654 (YPGN…TVYE), and 1655–1675 (YDPE…SSFH). N-linked (GlcNAc...) asparagine glycosylation is found at N1663, N1699, N1757, N1781, and N1842. 11 YD repeats span residues 1845–1864 (YSPS…EKME), 1865–1885 (YDQS…WSYT), 1886–1904 (YLEK…YIFE), 1905–1925 (YDQP…HSLQ), 1933–1949 (YRNI…FIQD), 1950–1969 (YSRD…RRVL), 1970–1989 (YKYT…TQVT), 1992–2012 (YEES…FICT), 2015–2035 (YRQT…EGLV), 2085–2105 (YDLN…FSAN), and 2113–2133 (YEIL…VGRM). Residue N2145 is glycosylated (N-linked (GlcNAc...) asparagine). 5 YD repeats span residues 2153–2173 (YDAD…WRYS), 2174–2194 (YDLN…LTPL), 2196–2216 (YDLR…DEDG), 2228–2248 (YNSN…TVQY), and 2250–2270 (YDGL…LQFF). Residue N2285 is glycosylated (N-linked (GlcNAc...) asparagine). 2 YD repeats span residues 2296–2313 (YDLQ…GEEY) and 2314–2337 (YVAC…IKEI). Phosphoserine is present on S2580. N2602 is a glycosylation site (N-linked (GlcNAc...) asparagine).

It belongs to the tenascin family. Teneurin subfamily. Homodimer; disulfide-linked. Heterodimer with either TENM2 or TENM3. May also form heterodimer with TENM4. Ten-1 ICD interacts with SORBS1 (via third SH3 domain). Interacts with MBD1. Ten-1 ICD interacts with HINT1. Post-translationally, derives from the plasma membrane form by proteolytic processing. Further proteolytic cleavage may be generated. Expressed in fetal brain.

Its subcellular location is the cell membrane. It is found in the nucleus. The protein localises to the nucleus speckle. The protein resides in the nucleus matrix. It localises to the cytoplasm. Its subcellular location is the cytoskeleton. Its function is as follows. Involved in neural development, regulating the establishment of proper connectivity within the nervous system. May function as a cellular signal transducer. Functionally, plays a role in the regulation of neuroplasticity in the limbic system. Mediates a rapid reorganization of actin- and tubulin-based cytoskeleton elements with an increase in dendritic arborization and spine density formation of neurons in the hippocampus and amygdala. Induces BDNF transcription inhibition in neurons. Activates the mitogen-activated protein (MAP) kinase 2 (MEK2) and extracellular signal-regulated kinase (ERK) cascade. Also acts as a bioactive neuroprotective peptide on limbic neurons of the brain and regulates stress-induced behavior: attenuates alkalosis-associated necrotic cell death and the effects of corticotropin-releasing factor (CRF) on c-fos/FOS induction and on the reinstatement of cocaine seeking. Induces gene transcription activation. This chain is Teneurin-1 (TENM1), found in Homo sapiens (Human).